The sequence spans 299 residues: Acidic endochitinase Pun g 14, amyloplastic (299 aa).

The N-terminal 26 residues, 1–26, are a transit peptide targeting the amyloplast; that stretch reads MAKTLPFSRALLLSLSILLVARAISA. Residues 27–299 form the GH18 domain; that stretch reads GDIAIYWGQN…TYSTTIKDQV (273 aa). Disulfide bonds link Cys-46-Cys-93 and Cys-76-Cys-83. Glu-153 acts as the Proton donor in catalysis. An intrachain disulfide couples Cys-185 to Cys-216.

It belongs to the glycosyl hydrolase 18 family. Chitinase class III subfamily. In terms of assembly, monomer. In terms of tissue distribution, highly expressed in seeds and to a lesser extent in the skin of the pomegranate fruit (at protein level). Not expressed in leaves or flesh of the fruit (at protein level).

The protein localises to the plastid. It is found in the amyloplast. The enzyme catalyses Random endo-hydrolysis of N-acetyl-beta-D-glucosaminide (1-&gt;4)-beta-linkages in chitin and chitodextrins.. Activity is not affected by addition of 10 mM Ca(2+) or removal of Ca(2+). Functionally, hydrolyzes chitin. Probable calcium storage protein of the seeds. Binds calcium ions with high capacity and low affinity. Involved in seed germination. This is Acidic endochitinase Pun g 14, amyloplastic from Punica granatum (Pomegranate).